The chain runs to 285 residues: Putative cuticle collagen 75 (285 aa).

Triple-helical region regions lie at residues 87–116 and 133–261; these read GRIG…PGEL and GPKG…PGLD. Positions 207–231 are enriched in low complexity; that stretch reads PGAPGIPGEEGLSGPTGQPGSPGSI. The tract at residues 207-257 is disordered; the sequence is PGAPGIPGEEGLSGPTGQPGSPGSIGAMGYEGAYGDRGEPGPPGPIGRRGG.

This sequence belongs to the cuticular collagen family. In terms of assembly, collagen polypeptide chains are complexed within the cuticle by disulfide bonds and other types of covalent cross-links.

Functionally, nematode cuticles are composed largely of collagen-like proteins. The cuticle functions both as an exoskeleton and as a barrier to protect the worm from its environment. The protein is Putative cuticle collagen 75 (col-75) of Caenorhabditis elegans.